The sequence spans 250 residues: MSGHSKWSTIKRKKGAMDAKRGALFAKLSRAITVAAREGGGDPEANPALALAVQKAKDANMPNDNIQRAIDRGTGAGSEAGDYEHITYEGYAPGGVAVMVEVLTDNRNRAASDIRYIFSKHGGKLGTSGSVAYLFERKGVVLVPADAVGEEELMEAALEAGAEDVELDGDHWRVTTEPSEFMAVRQGLEEAGIRYESAQLSMEPMNTVKLDASTARQTLRLIDALEENDDVQEVYANFDISEEVMAEVAG.

The protein belongs to the TACO1 family.

The protein resides in the cytoplasm. The sequence is that of Probable transcriptional regulatory protein Rxyl_1318 from Rubrobacter xylanophilus (strain DSM 9941 / JCM 11954 / NBRC 16129 / PRD-1).